The sequence spans 325 residues: MEEERNSDEKENALCGRSLTAASRDGGGRMPAAPLAQGKVERGKVYSGDGVLGYLEMLEAQAHELGLKQEEKEQQEKKLDRLKARVQELRARRDELRAKVELQEKRLLDKEGVMTDPAQPSAQTVLEWKVKSLKAMLQVFYLTGISGKLTKQGVCFCISTAYEGTYLDSYYVDLLIKPLVKIQRHSVPVFIPLEQIAKKYLQTDIRRFLSVLSDHLNAYVGRRRQADQLEEHFSDHIDGTLQRNSLCNLLVFNYTVSSNSKTFPFNVRLLYGDLCCSLPTEAIISCTPGTLPLLAEMAAAHSNAFRHMALHKAFDSLINAKESQN.

A disordered region spans residues 1 to 35 (MEEERNSDEKENALCGRSLTAASRDGGGRMPAAPL). The stretch at 55 to 112 (LEMLEAQAHELGLKQEEKEQQEKKLDRLKARVQELRARRDELRAKVELQEKRLLDKEG) forms a coiled coil.

Belongs to the CENP-O/MCM21 family. Component of the CENPA-HI complex, at least composed of CENPH, CENPI, CENPK, CENPL, CENPM, CENPO and CENPP. Component of a discrete complex composed of at least CENPO, CENPP, CENPQ, CENPR and CENPU.

It is found in the nucleus. It localises to the chromosome. Its subcellular location is the centromere. Component of the CENPA-HI complex, a centromeric complex involved in assembly of kinetochore proteins, mitotic progression and chromosome segregation. Involved in kinetochore assembly and required for recovery from spindle damage. The protein is Centromere protein O (CENPO) of Gallus gallus (Chicken).